The chain runs to 215 residues: MOB kinase activator-like 1A (215 aa).

Residues 1 to 27 (MSLFGLGRNQKTFRPKKSAPSGSKGAQ) are disordered. Positions 79, 84, 161, and 166 each coordinate Zn(2+).

It belongs to the MOB1/phocein family. In terms of assembly, interacts with SIK1 at the plasma membrane and in the nucleus. As to expression, constitutively expressed. In 3- to 4-day-old seedlings, expression is high in the shoot apical meristem and along the vasculature in cotyledons, hypocotyls and roots. At the root tip, expression is detected in columella and lateral root cap cells as well as in the stem cell niche around the quiescent center (QC). The levels of expression decrease progressively in the meristematic zone from the root tip towards the base of the root, becoming stronger again in the elongation zone. In flowers, expression appears localized in ovules and pollen.

It localises to the nucleus. The protein localises to the cell membrane. It is found in the vacuole membrane. In terms of biological role, plays a key role in regulation of cell expansion and cell division. Required for proper plant development, the correct patterning of the root meristem and the control of root growth. Involved in both sporogenesis and gametogenesis. The chain is MOB kinase activator-like 1A from Arabidopsis thaliana (Mouse-ear cress).